The sequence spans 622 residues: Apical membrane antigen 1 (622 aa).

The signal sequence occupies residues 1-24; it reads MRKLYCVLLLSAFEFTYMINFGRG. The Extracellular segment spans residues 25–546; sequence QNYWEHPYQN…EHKPTYDNMK (522 aa). Cystine bridges form between Cys149–Cys302, Cys217–Cys247, Cys263–Cys275, Cys320–Cys418, and Cys337–Cys409. Asn162 is a glycosylation site (N-linked (GlcNAc...) asparagine). N-linked (GlcNAc...) asparagine glycans are attached at residues Asn286, Asn371, Asn421, Asn422, and Asn499. Intrachain disulfides connect Cys443-Cys502, Cys490-Cys507, and Cys492-Cys509. Residues 547–567 form a helical membrane-spanning segment; it reads IIIASSAAVAVLATILMVYLY. The Cytoplasmic segment spans residues 568 to 622; that stretch reads KRKGNAEKYDKMDQPQDYGKSTSRNDEMLDPEASFWGEEKRASHTTPVLMEKPYY. A disordered region spans residues 577-607; it reads DKMDQPQDYGKSTSRNDEMLDPEASFWGEEK.

Belongs to the apicomplexan parasites AMA1 family.

The protein localises to the membrane. Functionally, involved in parasite invasion of erythrocytes. This Plasmodium falciparum (isolate Camp / Malaysia) protein is Apical membrane antigen 1 (AMA-1).